A 486-amino-acid chain; its full sequence is Glutamate--tRNA ligase (486 aa).

Positions 11–21 match the 'HIGH' region motif; it reads PSPTGLLHIGN. Positions 255–259 match the 'KMSKS' region motif; it reads KLSKR. Lysine 258 contributes to the ATP binding site.

Belongs to the class-I aminoacyl-tRNA synthetase family. Glutamate--tRNA ligase type 1 subfamily. In terms of assembly, monomer.

The protein resides in the cytoplasm. It catalyses the reaction tRNA(Glu) + L-glutamate + ATP = L-glutamyl-tRNA(Glu) + AMP + diphosphate. Catalyzes the attachment of glutamate to tRNA(Glu) in a two-step reaction: glutamate is first activated by ATP to form Glu-AMP and then transferred to the acceptor end of tRNA(Glu). The chain is Glutamate--tRNA ligase from Streptococcus pneumoniae serotype 19F (strain G54).